Consider the following 681-residue polypeptide: Methionine--tRNA ligase (681 aa).

Residues 14–24 (PYANGSIHLGH) carry the 'HIGH' region motif. The Zn(2+) site is built by cysteine 145, cysteine 148, cysteine 158, and cysteine 161. A 'KMSKS' region motif is present at residues 331–335 (KMSKS). Residue lysine 334 coordinates ATP. In terms of domain architecture, tRNA-binding spans 579-681 (TFAAVDLRVA…SGAKPGQRIK (103 aa)).

This sequence belongs to the class-I aminoacyl-tRNA synthetase family. MetG type 1 subfamily. Homodimer. Requires Zn(2+) as cofactor.

It localises to the cytoplasm. It carries out the reaction tRNA(Met) + L-methionine + ATP = L-methionyl-tRNA(Met) + AMP + diphosphate. Its function is as follows. Is required not only for elongation of protein synthesis but also for the initiation of all mRNA translation through initiator tRNA(fMet) aminoacylation. The chain is Methionine--tRNA ligase from Pseudomonas putida (strain W619).